The sequence spans 242 residues: Mediator of RNA polymerase II transcription subunit 19-A (242 aa).

The segment covering Met1–Gln15 has biased composition (polar residues). Disordered regions lie at residues Met1–Ser33 and Pro171–Arg242. Over residues Pro171 to His184 the composition is skewed to basic residues. Residues Thr193–Arg210 are compositionally biased toward basic and acidic residues. The segment covering Arg211 to Arg223 has biased composition (basic residues). A compositionally biased stretch (polar residues) spans Thr232 to Arg242.

This sequence belongs to the Mediator complex subunit 19 family. Component of the Mediator complex.

It localises to the nucleus. Its function is as follows. Component of the Mediator complex, a coactivator involved in the regulated transcription of nearly all RNA polymerase II-dependent genes. Mediator functions as a bridge to convey information from gene-specific regulatory proteins to the basal RNA polymerase II transcription machinery. Mediator is recruited to promoters by direct interactions with regulatory proteins and serves as a scaffold for the assembly of a functional preinitiation complex with RNA polymerase II and the general transcription factors. This Danio rerio (Zebrafish) protein is Mediator of RNA polymerase II transcription subunit 19-A (med19a).